Consider the following 285-residue polypeptide: Hsp90 co-chaperone Cdc37-like 1 (285 aa).

The disordered stretch occupies residues 34-54; that stretch reads LHNSESMDQEQAMAQAELSEL. Residues 35 to 73 adopt a coiled-coil conformation; the sequence is HNSESMDQEQAMAQAELSELQRSEEEWRRKEAALSQGEN.

The protein belongs to the CDC37 family. As to quaternary structure, forms complexes with Hsp70 and Hsp90.

It is found in the cytoplasm. Co-chaperone that binds to numerous proteins and promotes their interaction with Hsp70 and Hsp90. This Xenopus tropicalis (Western clawed frog) protein is Hsp90 co-chaperone Cdc37-like 1 (cdc37l1).